Here is a 232-residue protein sequence, read N- to C-terminus: 5'-methylthioadenosine/S-adenosylhomocysteine nucleosidase (232 aa).

Catalysis depends on Glu-14, which acts as the Proton acceptor. Substrate-binding positions include Gly-80, Val-154, and 175–176 (ME). The active-site Proton donor is Asp-199.

This sequence belongs to the PNP/UDP phosphorylase family. MtnN subfamily.

It carries out the reaction S-adenosyl-L-homocysteine + H2O = S-(5-deoxy-D-ribos-5-yl)-L-homocysteine + adenine. The enzyme catalyses S-methyl-5'-thioadenosine + H2O = 5-(methylsulfanyl)-D-ribose + adenine. It catalyses the reaction 5'-deoxyadenosine + H2O = 5-deoxy-D-ribose + adenine. The protein operates within amino-acid biosynthesis; L-methionine biosynthesis via salvage pathway; S-methyl-5-thio-alpha-D-ribose 1-phosphate from S-methyl-5'-thioadenosine (hydrolase route): step 1/2. Functionally, catalyzes the irreversible cleavage of the glycosidic bond in both 5'-methylthioadenosine (MTA) and S-adenosylhomocysteine (SAH/AdoHcy) to adenine and the corresponding thioribose, 5'-methylthioribose and S-ribosylhomocysteine, respectively. Also cleaves 5'-deoxyadenosine, a toxic by-product of radical S-adenosylmethionine (SAM) enzymes, into 5-deoxyribose and adenine. This chain is 5'-methylthioadenosine/S-adenosylhomocysteine nucleosidase, found in Actinobacillus pleuropneumoniae serotype 5b (strain L20).